Here is a 373-residue protein sequence, read N- to C-terminus: NADPH-dependent 3-keto-steroid reductase Hsd3b5 (373 aa).

NADP(+) contacts are provided by residues 10 to 15, tyrosine 155, and lysine 159; that span reads GAGGFL. The Proton donor role is filled by lysine 159. Residues 288-308 traverse the membrane as a helical segment; it reads LPLLYWLAFLLETVSFLLRPF. Residue lysine 350 is modified to N6-acetyllysine.

It belongs to the 3-beta-HSD family. In terms of tissue distribution, expressed predominantly in male liver.

It localises to the endoplasmic reticulum membrane. Its subcellular location is the mitochondrion membrane. It catalyses the reaction a 3beta-hydroxysteroid + NADP(+) = a 3-oxosteroid + NADPH + H(+). It carries out the reaction 5alpha-androstane-3beta,17beta-diol + NADP(+) = 17beta-hydroxy-5alpha-androstan-3-one + NADPH + H(+). The catalysed reaction is 3beta-hydroxy-5alpha-androstan-17-one + NADP(+) = 5alpha-androstan-3,17-dione + NADPH + H(+). It functions in the pathway steroid metabolism. In terms of biological role, responsible for the reduction of the oxo group on the C-3 of 5alpha-androstane steroids. Catalyzes the conversion of dihydrotestosterone to its inactive form 5alpha-androstanediol, that does not bind androgen receptor/AR. Also converts androstanedione, a precursor of testosterone and estrone, to epiandrosterone. Does not function as an isomerase. The protein is NADPH-dependent 3-keto-steroid reductase Hsd3b5 of Rattus norvegicus (Rat).